Consider the following 758-residue polypeptide: Spastin (758 aa).

Positions 1-99 are disordered; that stretch reads MVRTKNQSSS…PTTCSPRSGH (99 aa). Topologically, residues 1-121 are cytoplasmic; it reads MVRTKNQSSS…KQNLYVVSFP (121 aa). Residues 1–210 are required for localization to punctate cytoplasmic foci; the sequence is MVRTKNQSSS…RPIQPLEMAA (210 aa). 4 stretches are compositionally biased toward low complexity: residues 8-28, 43-58, 66-76, and 85-95; these read SSSS…SSGA, RSSS…AGGS, SSNRRSPGSSP, and TDDLTPTTCSP. Residues 122-142 constitute an intramembrane region (helical); it reads IIFLFNVLRSLIYQLFCIFRY. At 143–758 the chain is on the cytoplasmic side; sequence LYGASTKVIY…WSQDYGDITI (616 aa). 2 stretches are compositionally biased toward polar residues: residues 169–180 and 189–198; these read SKEQQQSLNHPS and QEQQLSNQPQ. The disordered stretch occupies residues 169 to 203; it reads SKEQQQSLNHPSELSREGDGQEQQLSNQPQRFRPI. A sufficient for interaction with microtubules and microtubule severing region spans residues 208–758; the sequence is MAANRPGGGY…WSQDYGDITI (551 aa). An MIT domain is found at 233–308; the sequence is HRRAFEYISK…SMARDRLHFL (76 aa). 2 disordered regions span residues 353–375 and 390–454; these read RVRS…SGRK and NKSQ…ASTP. Composition is skewed to polar residues over residues 390 to 406 and 425 to 454; these read NKSQ…TSVG and QFSS…ASTP. A required for interaction with microtubules region spans residues 443–455; the sequence is NNGPSGSGASTPV. 523 to 530 contributes to the ATP binding site; the sequence is GPPGNGKT.

This sequence belongs to the AAA ATPase family. Spastin subfamily. Homohexamer. The homohexamer is stabilized by ATP-binding. The homohexamer may adopt a ring conformation through which microtubules pass prior to being severed. Interacts with microtubules. Interacts with atl; may be involved in microtubule dynamics.

It is found in the membrane. Its subcellular location is the cytoplasm. It localises to the cytoskeleton. The protein localises to the microtubule organizing center. The protein resides in the centrosome. It is found in the chromosome. Its subcellular location is the lipid droplet. The enzyme catalyses n ATP + n H2O + a microtubule = n ADP + n phosphate + (n+1) alpha/beta tubulin heterodimers.. Functionally, ATP-dependent microtubule severing protein. Stimulates microtubule minus-end depolymerization and poleward microtubule flux in the mitotic spindle. Regulates microtubule stability in the neuromuscular junction synapse. Involved in lipid metabolism by regulating the size and distribution of lipid droplets. Involved in axon regeneration by regulating microtubule severing. This Drosophila erecta (Fruit fly) protein is Spastin.